A 256-amino-acid chain; its full sequence is Ribosomal RNA small subunit methyltransferase J (256 aa).

Residues 101–102, 117–118, and D174 contribute to the S-adenosyl-L-methionine site; these read RD and ER.

Belongs to the methyltransferase superfamily. RsmJ family.

Its subcellular location is the cytoplasm. The enzyme catalyses guanosine(1516) in 16S rRNA + S-adenosyl-L-methionine = N(2)-methylguanosine(1516) in 16S rRNA + S-adenosyl-L-homocysteine + H(+). Its function is as follows. Specifically methylates the guanosine in position 1516 of 16S rRNA. The polypeptide is Ribosomal RNA small subunit methyltransferase J (Chromohalobacter salexigens (strain ATCC BAA-138 / DSM 3043 / CIP 106854 / NCIMB 13768 / 1H11)).